Consider the following 125-residue polypeptide: Small ribosomal subunit protein uS12 (125 aa).

Aspartate 89 carries the post-translational modification 3-methylthioaspartic acid.

Belongs to the universal ribosomal protein uS12 family. Part of the 30S ribosomal subunit. Contacts proteins S8 and S17. May interact with IF1 in the 30S initiation complex.

Its function is as follows. With S4 and S5 plays an important role in translational accuracy. Interacts with and stabilizes bases of the 16S rRNA that are involved in tRNA selection in the A site and with the mRNA backbone. Located at the interface of the 30S and 50S subunits, it traverses the body of the 30S subunit contacting proteins on the other side and probably holding the rRNA structure together. The combined cluster of proteins S8, S12 and S17 appears to hold together the shoulder and platform of the 30S subunit. This Cupriavidus necator (strain ATCC 17699 / DSM 428 / KCTC 22496 / NCIMB 10442 / H16 / Stanier 337) (Ralstonia eutropha) protein is Small ribosomal subunit protein uS12.